Reading from the N-terminus, the 507-residue chain is Histidine ammonia-lyase (507 aa).

The 5-imidazolinone (Ala-Gly) cross-link spans 142–144 (ASG). At S143 the chain carries 2,3-didehydroalanine (Ser).

The protein belongs to the PAL/histidase family. In terms of processing, contains an active site 4-methylidene-imidazol-5-one (MIO), which is formed autocatalytically by cyclization and dehydration of residues Ala-Ser-Gly.

It is found in the cytoplasm. The catalysed reaction is L-histidine = trans-urocanate + NH4(+). It functions in the pathway amino-acid degradation; L-histidine degradation into L-glutamate; N-formimidoyl-L-glutamate from L-histidine: step 1/3. This chain is Histidine ammonia-lyase, found in Maricaulis maris (strain MCS10) (Caulobacter maris).